A 243-amino-acid polypeptide reads, in one-letter code: Hydroxyacylglutathione hydrolase (243 aa).

7 residues coordinate Zn(2+): histidine 52, histidine 54, aspartate 56, histidine 57, histidine 108, aspartate 125, and histidine 163.

The protein belongs to the metallo-beta-lactamase superfamily. Glyoxalase II family. Monomer. Requires Zn(2+) as cofactor.

The catalysed reaction is an S-(2-hydroxyacyl)glutathione + H2O = a 2-hydroxy carboxylate + glutathione + H(+). It functions in the pathway secondary metabolite metabolism; methylglyoxal degradation; (R)-lactate from methylglyoxal: step 2/2. Its function is as follows. Thiolesterase that catalyzes the hydrolysis of S-D-lactoyl-glutathione to form glutathione and D-lactic acid. This Haemophilus influenzae (strain PittGG) protein is Hydroxyacylglutathione hydrolase.